Consider the following 268-residue polypeptide: Tryptophan synthase alpha chain (268 aa).

Active-site proton acceptor residues include glutamate 49 and aspartate 60.

The protein belongs to the TrpA family. As to quaternary structure, tetramer of two alpha and two beta chains.

It catalyses the reaction (1S,2R)-1-C-(indol-3-yl)glycerol 3-phosphate + L-serine = D-glyceraldehyde 3-phosphate + L-tryptophan + H2O. It functions in the pathway amino-acid biosynthesis; L-tryptophan biosynthesis; L-tryptophan from chorismate: step 5/5. Its function is as follows. The alpha subunit is responsible for the aldol cleavage of indoleglycerol phosphate to indole and glyceraldehyde 3-phosphate. The chain is Tryptophan synthase alpha chain from Mannheimia succiniciproducens (strain KCTC 0769BP / MBEL55E).